The following is a 444-amino-acid chain: Adenylosuccinate synthetase (444 aa).

Residues glycine 13 to lysine 19 and glycine 41 to threonine 43 each bind GTP. Catalysis depends on aspartate 14, which acts as the Proton acceptor. Aspartate 14 and glycine 41 together coordinate Mg(2+). IMP contacts are provided by residues aspartate 14–lysine 17, asparagine 39–histidine 42, threonine 129, arginine 143, glutamine 224, threonine 239, and arginine 303. Histidine 42 functions as the Proton donor in the catalytic mechanism. Substrate is bound at residue threonine 299–arginine 305. Residues arginine 305, lysine 331–aspartate 333, and serine 413–glycine 415 contribute to the GTP site.

The protein belongs to the adenylosuccinate synthetase family. In terms of assembly, homodimer. Mg(2+) is required as a cofactor.

The protein localises to the cytoplasm. The enzyme catalyses IMP + L-aspartate + GTP = N(6)-(1,2-dicarboxyethyl)-AMP + GDP + phosphate + 2 H(+). It functions in the pathway purine metabolism; AMP biosynthesis via de novo pathway; AMP from IMP: step 1/2. In terms of biological role, plays an important role in the de novo pathway of purine nucleotide biosynthesis. Catalyzes the first committed step in the biosynthesis of AMP from IMP. The polypeptide is Adenylosuccinate synthetase (Synechocystis sp. (strain ATCC 27184 / PCC 6803 / Kazusa)).